We begin with the raw amino-acid sequence, 185 residues long: Peptidyl-tRNA hydrolase (185 aa).

A tRNA-binding site is contributed by tyrosine 14. Residue histidine 19 is the Proton acceptor of the active site. 3 residues coordinate tRNA: phenylalanine 64, asparagine 66, and asparagine 112.

It belongs to the PTH family. As to quaternary structure, monomer.

It localises to the cytoplasm. The catalysed reaction is an N-acyl-L-alpha-aminoacyl-tRNA + H2O = an N-acyl-L-amino acid + a tRNA + H(+). In terms of biological role, hydrolyzes ribosome-free peptidyl-tRNAs (with 1 or more amino acids incorporated), which drop off the ribosome during protein synthesis, or as a result of ribosome stalling. Catalyzes the release of premature peptidyl moieties from peptidyl-tRNA molecules trapped in stalled 50S ribosomal subunits, and thus maintains levels of free tRNAs and 50S ribosomes. The sequence is that of Peptidyl-tRNA hydrolase from Latilactobacillus sakei subsp. sakei (strain 23K) (Lactobacillus sakei subsp. sakei).